We begin with the raw amino-acid sequence, 117 residues long: Synaptobrevin homolog 1 (117 aa).

The interval 1 to 30 (MSSSTPFDPYALSEHDEERPQNVQSKSRTA) is disordered. The Cytoplasmic segment spans residues 1–94 (MSSSTPFDPY…MWYKDLKMKM (94 aa)). Residues 28–88 (RTAELQAEID…NRVRKAMWYK (61 aa)) enclose the v-SNARE coiled-coil homology domain. A Glycyl lysine isopeptide (Lys-Gly) (interchain with G-Cter in ubiquitin) cross-link involves residue Lys63. Cys95 carries the S-palmitoyl cysteine lipid modification. The chain crosses the membrane as a helical; Anchor for type IV membrane protein span at residues 95–111 (CLALVIIILLVVIIVPI). Residues 112-117 (AVHFSR) are Vesicular-facing.

It belongs to the synaptobrevin family. Palmitoylated by SWF1.

The protein resides in the endomembrane system. Functionally, SNC1 and SNC2 are vesicle-targeting proteins essential for normal secretory traffic between the Golgi and the plasma membrane. They may also be involved in vesicle fusion. In Saccharomyces cerevisiae (strain ATCC 204508 / S288c) (Baker's yeast), this protein is Synaptobrevin homolog 1 (SNC1).